The sequence spans 434 residues: Pre-B-cell leukemia transcription factor 3 (434 aa).

Residues 20 to 41 (SVQGGMALPPPPHGHEGADGDG) are disordered. Over residues 32 to 41 (HGHEGADGDG) the composition is skewed to basic and acidic residues. The PBC domain occupies 41 to 234 (GRKQDIGDIL…VMILRSRFLD (194 aa)). The segment at 48–127 (DILHQIMTIT…EGVSGPEKGG (80 aa)) is PBC-A. The segment at 130 to 234 (AAAAAAAAAS…VMILRSRFLD (105 aa)) is PBC-B. Positions 235–297 (ARRKRRNFSK…NKRIRYKKNI (63 aa)) form a DNA-binding region, homeobox; TALE-type. The span at 326 to 341 (NQTNSPTTPNSGSSGS) shows a compositional bias: low complexity. 2 disordered regions span residues 326-349 (NQTNSPTTPNSGSSGSFNLPNSGD) and 405-434 (ANGGWQDATTPSSVTSPTEGPGSVHSDTSN). Residues 405–422 (ANGGWQDATTPSSVTSPT) show a composition bias toward polar residues.

Belongs to the TALE/PBX homeobox family. In terms of assembly, interacts with PBXIP1.

It localises to the nucleus. Transcriptional activator that binds the sequence 5'-ATCAATCAA-3'. The sequence is that of Pre-B-cell leukemia transcription factor 3 (Pbx3) from Mus musculus (Mouse).